Here is a 193-residue protein sequence, read N- to C-terminus: Large ribosomal subunit protein uL18 (193 aa).

This sequence belongs to the universal ribosomal protein uL18 family. Part of the 50S ribosomal subunit. Contacts the 5S and 23S rRNAs.

Functionally, this is one of the proteins that bind and probably mediate the attachment of the 5S RNA into the large ribosomal subunit, where it forms part of the central protuberance. The sequence is that of Large ribosomal subunit protein uL18 from Methanococcus maripaludis (strain C6 / ATCC BAA-1332).